Reading from the N-terminus, the 28-residue chain is Cyclotide vodo I3 (28 aa).

3 disulfides stabilise this stretch: C4–C18, C8–C20, and C13–C25.

Post-translationally, this is a cyclic peptide. Contains 3 disulfide bonds.

Functionally, probably participates in a plant defense mechanism. The polypeptide is Cyclotide vodo I3 (Viola odorata (Sweet violet)).